Here is a 363-residue protein sequence, read N- to C-terminus: Sulfate/thiosulfate import ATP-binding protein CysA (363 aa).

The region spanning 3–237 (IEINNISKYF…PATRFVLEFL (235 aa)) is the ABC transporter domain. Residue 35 to 42 (GPSGSGKT) coordinates ATP.

Belongs to the ABC transporter superfamily. Sulfate/tungstate importer (TC 3.A.1.6) family. The complex is composed of two ATP-binding proteins (CysA), two transmembrane proteins (CysT and CysW) and a solute-binding protein (CysP).

Its subcellular location is the cell inner membrane. The enzyme catalyses sulfate(out) + ATP + H2O = sulfate(in) + ADP + phosphate + H(+). It carries out the reaction thiosulfate(out) + ATP + H2O = thiosulfate(in) + ADP + phosphate + H(+). Functionally, part of the ABC transporter complex CysAWTP involved in sulfate/thiosulfate import. Responsible for energy coupling to the transport system. The sequence is that of Sulfate/thiosulfate import ATP-binding protein CysA from Yersinia pseudotuberculosis serotype I (strain IP32953).